A 407-amino-acid chain; its full sequence is Putative glucose/galactose transporter (407 aa).

A run of 12 helical transmembrane segments spans residues 11 to 31 (GSLT…DILI), 47 to 67 (LIQF…GNVI), 70 to 90 (IGYP…CALF), 96 to 116 (FGSY…IVCL), 139 to 159 (VQAF…LLIF), 180 to 200 (VQMP…IMYL), 225 to 245 (FVFG…IGSF), 263 to 283 (HYLV…SVLM), 300 to 320 (IVLI…ALTF), 321 to 341 (VGFF…LNLG), 349 to 369 (GVIS…GAVT), and 378 to 398 (NLLY…FFAL).

Belongs to the major facilitator superfamily. FHS transporter (TC 2.A.1.7) family.

It is found in the cell inner membrane. Intake of glucose and galactose. This Helicobacter pylori (strain ATCC 700392 / 26695) (Campylobacter pylori) protein is Putative glucose/galactose transporter (gluP).